We begin with the raw amino-acid sequence, 264 residues long: MTRIVIAGPRGNMGQEAVKLCLREESFELVAVVDSKNDGKQLKGLQEFQQGDVPVYTDMARCFAEHEPDVLIDLTAPAFGRKHMEVAFEHGVRPVVGTTGFSDEDIRDLTKLAEAKELGAIIAPNFAIGAILMMKFAQTAARYMNDVEIIEQHHDRKLDAPSGTAVKTAQLIAEVRAPKKQGHEQEREEMAGARGADFDGMKIHSVRLPGRVAHQEVLFGGVGQTLSIRHDSLNRESFMPGVKLAVEQVVKLSTLVYGLENLID.

8 to 13 (GPRGNM) is a binding site for NAD(+). K36 serves as a coordination point for NADP(+). Residues 97-99 (GTT) and 123-126 (APNF) contribute to the NAD(+) site. Catalysis depends on H153, which acts as the Proton donor/acceptor. Residue H154 participates in (S)-2,3,4,5-tetrahydrodipicolinate binding. The active-site Proton donor is the K157. A (S)-2,3,4,5-tetrahydrodipicolinate-binding site is contributed by 163-164 (GT).

The protein belongs to the DapB family.

The protein resides in the cytoplasm. The enzyme catalyses (S)-2,3,4,5-tetrahydrodipicolinate + NAD(+) + H2O = (2S,4S)-4-hydroxy-2,3,4,5-tetrahydrodipicolinate + NADH + H(+). It carries out the reaction (S)-2,3,4,5-tetrahydrodipicolinate + NADP(+) + H2O = (2S,4S)-4-hydroxy-2,3,4,5-tetrahydrodipicolinate + NADPH + H(+). It participates in amino-acid biosynthesis; L-lysine biosynthesis via DAP pathway; (S)-tetrahydrodipicolinate from L-aspartate: step 4/4. Functionally, catalyzes the conversion of 4-hydroxy-tetrahydrodipicolinate (HTPA) to tetrahydrodipicolinate. This chain is 4-hydroxy-tetrahydrodipicolinate reductase, found in Shouchella clausii (strain KSM-K16) (Alkalihalobacillus clausii).